We begin with the raw amino-acid sequence, 365 residues long: Chorismate synthase (365 aa).

NADP(+)-binding residues include R48 and R54. FMN-binding positions include R125–S127, N237–A238, G277, K292–S296, and R318.

It belongs to the chorismate synthase family. In terms of assembly, homotetramer. The cofactor is FMNH2.

It catalyses the reaction 5-O-(1-carboxyvinyl)-3-phosphoshikimate = chorismate + phosphate. It participates in metabolic intermediate biosynthesis; chorismate biosynthesis; chorismate from D-erythrose 4-phosphate and phosphoenolpyruvate: step 7/7. Functionally, catalyzes the anti-1,4-elimination of the C-3 phosphate and the C-6 proR hydrogen from 5-enolpyruvylshikimate-3-phosphate (EPSP) to yield chorismate, which is the branch point compound that serves as the starting substrate for the three terminal pathways of aromatic amino acid biosynthesis. This reaction introduces a second double bond into the aromatic ring system. This chain is Chorismate synthase, found in Paracidovorax citrulli (strain AAC00-1) (Acidovorax citrulli).